The primary structure comprises 534 residues: Ethanolamine kinase (534 aa).

S23 carries the post-translational modification Phosphoserine.

This sequence belongs to the choline/ethanolamine kinase family.

It localises to the cytoplasm. It catalyses the reaction ethanolamine + ATP = phosphoethanolamine + ADP + H(+). The enzyme catalyses choline + ATP = phosphocholine + ADP + H(+). Its pathway is phospholipid metabolism; phosphatidylethanolamine biosynthesis; phosphatidylethanolamine from ethanolamine: step 1/3. Its function is as follows. Catalyzes the committed step of phosphatidylethanolamine synthesis via the CDP-ethanolamine branch of the Kennedy pathway. Also exhibits choline kinase activity, thus contributing to phosphatidylcholine synthesis via the CDP-choline pathway, but its preferred substrate is ethanolamine. This chain is Ethanolamine kinase (EKI1), found in Saccharomyces cerevisiae (strain ATCC 204508 / S288c) (Baker's yeast).